A 197-amino-acid chain; its full sequence is Probable nicotinate-nucleotide adenylyltransferase (197 aa).

The protein belongs to the NadD family.

It carries out the reaction nicotinate beta-D-ribonucleotide + ATP + H(+) = deamido-NAD(+) + diphosphate. It participates in cofactor biosynthesis; NAD(+) biosynthesis; deamido-NAD(+) from nicotinate D-ribonucleotide: step 1/1. Catalyzes the reversible adenylation of nicotinate mononucleotide (NaMN) to nicotinic acid adenine dinucleotide (NaAD). In Bordetella parapertussis (strain 12822 / ATCC BAA-587 / NCTC 13253), this protein is Probable nicotinate-nucleotide adenylyltransferase.